Reading from the N-terminus, the 155-residue chain is Probable adenylyl-sulfate kinase (155 aa).

9–16 (GPSGAGKT) contacts ATP. Ser-83 acts as the Phosphoserine intermediate in catalysis. Residues 134-155 (LDGEYEEPENPEVVVDTDKNDR) form a disordered region.

Belongs to the APS kinase family.

The catalysed reaction is adenosine 5'-phosphosulfate + ATP = 3'-phosphoadenylyl sulfate + ADP + H(+). The protein operates within sulfur metabolism; hydrogen sulfide biosynthesis; sulfite from sulfate: step 2/3. Functionally, catalyzes the synthesis of activated sulfate. The sequence is that of Probable adenylyl-sulfate kinase (cysC) from Archaeoglobus fulgidus (strain ATCC 49558 / DSM 4304 / JCM 9628 / NBRC 100126 / VC-16).